The chain runs to 641 residues: Calpain-6 (641 aa).

The Calpain catalytic domain occupies 26–343; sequence LFCDPTFLPE…FHKLNVCRNV (318 aa). The interval 344-495 is domain III; the sequence is NNPIFGRKEL…IFSEVPVQLR (152 aa). The 124-residue stretch at 498-621 folds into the C2 domain; sequence TLDMPKMSCW…YLRKKGGPTA (124 aa).

The protein belongs to the peptidase C2 family. As to quaternary structure, interacts (via domain III) with microtubules. Interacts (via domain II) with ARHGEF2 (via the N-terminal zinc finger). Expressed only in placenta.

It localises to the cytoplasm. Its subcellular location is the perinuclear region. The protein localises to the cytoskeleton. The protein resides in the spindle. Microtubule-stabilizing protein that may be involved in the regulation of microtubule dynamics and cytoskeletal organization. May act as a regulator of RAC1 activity through interaction with ARHGEF2 to control lamellipodial formation and cell mobility. Does not seem to have protease activity as it has lost the active site residues. This is Calpain-6 (CAPN6) from Homo sapiens (Human).